Here is a 459-residue protein sequence, read N- to C-terminus: Phosphoglucosamine mutase (459 aa).

The Phosphoserine intermediate role is filled by serine 105. Serine 105, aspartate 252, aspartate 254, and aspartate 256 together coordinate Mg(2+). Serine 105 bears the Phosphoserine mark.

This sequence belongs to the phosphohexose mutase family. It depends on Mg(2+) as a cofactor. Activated by phosphorylation.

The enzyme catalyses alpha-D-glucosamine 1-phosphate = D-glucosamine 6-phosphate. Functionally, catalyzes the conversion of glucosamine-6-phosphate to glucosamine-1-phosphate. The protein is Phosphoglucosamine mutase of Bifidobacterium adolescentis (strain ATCC 15703 / DSM 20083 / NCTC 11814 / E194a).